A 526-amino-acid polypeptide reads, in one-letter code: Plant intracellular Ras-group-related LRR protein 5 (526 aa).

11 LRR repeats span residues 229 to 252 (LSSL…IGGL), 253 to 275 (ISLT…IGDL), 276 to 297 (LNLV…SFNR), 298 to 321 (LIHL…IGSL), 323 to 344 (SLKK…ISGC), 346 to 367 (SMEE…VGKL), 368 to 390 (STLE…MSSM), 391 to 414 (ANLK…CYAK), 416 to 437 (LVKL…LIGN), 438 to 463 (LEKL…TLSN), and 465 to 484 (RVLQ…ITEK). Positions 485-492 (GAQAVVQY) match the GVYW; degenerate motif.

It belongs to the SHOC2 family. In terms of tissue distribution, widely expressed but preferentially in roots.

Functionally, leucine-rich repeat protein that likely mediates protein interactions, possibly in the context of signal transduction. The chain is Plant intracellular Ras-group-related LRR protein 5 (PIRL5) from Arabidopsis thaliana (Mouse-ear cress).